The following is a 501-amino-acid chain: Protein translocase subunit SecD (501 aa).

6 helical membrane-spanning segments follow: residues 9–29, 339–359, 371–391, 394–414, 447–467, and 470–490; these read NLWL…YAVV, AIEQ…VVLI, ISIF…GATL, PGIA…VLIF, VTLL…VKGF, and TLAL…KVFL.

The protein belongs to the SecD/SecF family. SecD subfamily. As to quaternary structure, forms a complex with SecF. Part of the essential Sec protein translocation apparatus which comprises SecA, SecYEG and auxiliary proteins SecDF. Other proteins may also be involved.

It localises to the cell inner membrane. In terms of biological role, part of the Sec protein translocase complex. Interacts with the SecYEG preprotein conducting channel. SecDF uses the proton motive force (PMF) to complete protein translocation after the ATP-dependent function of SecA. The protein is Protein translocase subunit SecD of Aquifex aeolicus (strain VF5).